A 287-amino-acid chain; its full sequence is uncharacterized protein (287 aa).

The disordered stretch occupies residues 1–23 (MTVSDSPAQRQTPPQTPGGTAPR). The span at 7 to 23 (PAQRQTPPQTPGGTAPR) shows a compositional bias: low complexity. Residues Asp31, Asp33, and Asp204 each coordinate Mg(2+).

The protein belongs to the HAD-like hydrolase superfamily. SerB family.

This is an uncharacterized protein from Mycobacterium tuberculosis (strain CDC 1551 / Oshkosh).